We begin with the raw amino-acid sequence, 138 residues long: Basic phospholipase A2 Sct-N6 (138 aa).

The signal sequence occupies residues 1–16; it reads MRTFWIVAVLLVGVEG. 7 cysteine pairs are disulfide-bonded: C42-C131, C44-C60, C59-C111, C65-C138, C66-C104, C73-C97, and C91-C102. The Ca(2+) site is built by Y43, G45, and G47. Residue H63 is part of the active site. D64 provides a ligand contact to Ca(2+). D105 is a catalytic residue.

Belongs to the phospholipase A2 family. Group II subfamily. D49 sub-subfamily. It depends on Ca(2+) as a cofactor. Expressed by the venom gland.

The protein resides in the secreted. The catalysed reaction is a 1,2-diacyl-sn-glycero-3-phosphocholine + H2O = a 1-acyl-sn-glycero-3-phosphocholine + a fatty acid + H(+). Its function is as follows. Snake venom phospholipase A2 (PLA2) that displays edema-inducing activities, as well as presynaptic neurotoxicity and low myotoxicity. PLA2 catalyzes the calcium-dependent hydrolysis of the 2-acyl groups in 3-sn-phosphoglycerides. The sequence is that of Basic phospholipase A2 Sct-N6 from Sistrurus tergeminus (Western massasauga).